A 485-amino-acid chain; its full sequence is Adenosylhomocysteinase 1 (485 aa).

Thr-64, Asp-139, and Glu-205 together coordinate substrate. 206-208 (TTT) lines the NAD(+) pocket. Substrate contacts are provided by Lys-235 and Asp-239. NAD(+) contacts are provided by residues 271–276 (GDVGKG), Glu-292, 348–350 (IGH), Asn-397, His-404, Lys-479, 479–483 (KPPHY), and Tyr-483.

Belongs to the adenosylhomocysteinase family. As to quaternary structure, homotetramer. NAD(+) serves as cofactor.

The catalysed reaction is S-adenosyl-L-homocysteine + H2O = L-homocysteine + adenosine. It participates in amino-acid biosynthesis; L-homocysteine biosynthesis; L-homocysteine from S-adenosyl-L-homocysteine: step 1/1. Essential protein during embryogenesis. Adenosylhomocysteine is a competitive inhibitor of S-adenosyl-L-methionine-dependent methyl transferase reactions; therefore adenosylhomocysteinase may play a key role in the control of methylations via regulation of the intracellular concentration of adenosylhomocysteine. Required for DNA methylation-dependent gene silencing. This chain is Adenosylhomocysteinase 1, found in Arabidopsis thaliana (Mouse-ear cress).